A 191-amino-acid chain; its full sequence is NF-kappa-B inhibitor-interacting Ras-like protein 2 (191 aa).

Residues methionine 1–glycine 191 form a small GTPase-like region. GTP is bound at residue glycine 11–threonine 18. The short motif at methionine 35–tyrosine 43 is the Effector region element. GTP-binding positions include aspartate 61–leucine 65 and asparagine 120–aspartate 123. The interval threonine 169–glycine 191 is disordered.

The protein belongs to the small GTPase superfamily. Ras family. KappaB-Ras subfamily. Interacts with both NF-kappa-B inhibitor alpha (NFKBIA) and beta (NFKBIB) in vitro. However, it probably only interacts with NFKBIB in vivo. Interacts with GFOD1.

It localises to the cytoplasm. Functionally, atypical Ras-like protein that acts as a potent regulator of NF-kappa-B activity by preventing the degradation of NF-kappa-B inhibitor beta (NFKBIB) by most signals, explaining why NFKBIB is more resistant to degradation. May act by blocking phosphorylation of NFKBIB and nuclear localization of p65/RELA NF-kappa-B subunit. It is unclear whether it acts as a GTPase. Both GTP- and GDP-bound forms block phosphorylation of NFKBIB. This Mus musculus (Mouse) protein is NF-kappa-B inhibitor-interacting Ras-like protein 2 (Nkiras2).